The following is a 580-amino-acid chain: N(6)-adenosine-methyltransferase catalytic subunit METTL3 (580 aa).

The interval 1 to 70 (MSDTWSSIQA…PKPSTTSVAP (70 aa)) is disordered. Ser2 is modified (N-acetylserine; alternate). Ser2 is subject to Phosphoserine; alternate. A compositionally biased stretch (basic and acidic residues) spans 28 to 37 (QDSGHLDLRN). A phosphoserine mark is found at Ser43, Ser48, and Ser50. Positions 55 to 67 (APTSSGPKPSTTS) are enriched in low complexity. Glycyl lysine isopeptide (Lys-Gly) (interchain with G-Cter in SUMO1) cross-links involve residues Lys177, Lys211, Lys212, and Lys215. The disordered stretch occupies residues 198–217 (LASSASEPAKEPAKKSRKHA). Residues 210–215 (AKKSRK) carry the Nuclear localization signal motif. Phosphoserine occurs at positions 219, 243, and 350. S-adenosyl-L-methionine contacts are provided by residues 377-378 (DI) and Asp395. The segment at 396–410 (PPWDIHMELPYGTLT) is gate loop 1. Interaction with METTL14 stretches follow at residues 450 to 454 (ERVDE) and 464 to 480 (QRIIRTGRTGHWLNHGK). Positions 462–479 (QLQRIIRTGRTGHWLNHG) are interphase loop. Residues 465–478 (RIIRTGRTGHWLNH) form a positively charged region required for RNA-binding region. Residues 507–515 (VRSTSHKPD) form a gate loop 2 region. S-adenosyl-L-methionine contacts are provided by residues Lys513, 536 to 539 (RPHN), and 549 to 550 (NQ).

The protein belongs to the MT-A70-like family. In terms of assembly, heterodimer; heterodimerizes with METTL14 to form an antiparallel heterodimer that constitutes an active methyltransferase. Component of the WMM complex, a N6-methyltransferase complex composed of a catalytic subcomplex, named MAC, and of an associated subcomplex, named MACOM. The MAC subcomplex is composed of METTL3 and METTL14. The MACOM subcomplex is composed of WTAP, ZC3H13, CBLL1/HAKAI, VIRMA, and, in some cases of RBM15 (RBM15 or RBM15B). Interacts with NCBP1/CBP80. Interacts with EIF4E. Interacts with EIF3B. In terms of processing, sumoylation inhibits the N6-adenosine-methyltransferase activity. Sumoylation does not affect subcellular location or interaction with METTL14. Desumoylated by SENP1. Present in both germ cells and somatic cells during testis development (at protein level).

The protein localises to the nucleus. Its subcellular location is the nucleus speckle. It is found in the cytoplasm. The catalysed reaction is an adenosine in mRNA + S-adenosyl-L-methionine = an N(6)-methyladenosine in mRNA + S-adenosyl-L-homocysteine + H(+). With respect to regulation, methyltransferase activity is regulated by miRNAs via a sequence pairing mechanism. Methyltransferase activity is inhibited by sumoylation. The METTL3-METTL14 heterodimer forms a N6-methyltransferase complex that methylates adenosine residues at the N(6) position of some RNAs and regulates various processes such as the circadian clock, differentiation of embryonic and hematopoietic stem cells, cortical neurogenesis, response to DNA damage, differentiation of T-cells and primary miRNA processing. In the heterodimer formed with METTL14, METTL3 constitutes the catalytic core. N6-methyladenosine (m6A), which takes place at the 5'-[AG]GAC-3' consensus sites of some mRNAs, plays a role in mRNA stability, processing, translation efficiency and editing. M6A acts as a key regulator of mRNA stability: methylation is completed upon the release of mRNA into the nucleoplasm and promotes mRNA destabilization and degradation. In embryonic stem cells (ESCs), m6A methylation of mRNAs encoding key naive pluripotency-promoting transcripts results in transcript destabilization, promoting differentiation of ESCs. M6A regulates the length of the circadian clock: acts as an early pace-setter in the circadian loop by putting mRNA production on a fast-track for facilitating nuclear processing, thereby providing an early point of control in setting the dynamics of the feedback loop. M6A also regulates circadian regulation of hepatic lipid metabolism. M6A regulates spermatogonial differentiation and meiosis and is essential for male fertility and spermatogenesis. Also required for oogenesis. Involved in the response to DNA damage: in response to ultraviolet irradiation, METTL3 rapidly catalyzes the formation of m6A on poly(A) transcripts at DNA damage sites, leading to the recruitment of POLK to DNA damage sites. M6A is also required for T-cell homeostasis and differentiation: m6A methylation of transcripts of SOCS family members (SOCS1, SOCS3 and CISH) in naive T-cells promotes mRNA destabilization and degradation, promoting T-cell differentiation. Inhibits the type I interferon response by mediating m6A methylation of IFNB. M6A also regulates cortical neurogenesis: m6A methylation of transcripts related to transcription factors, neural stem cells, the cell cycle and neuronal differentiation during brain development promotes their destabilization and decay, promoting differentiation of radial glial cells. M6A also takes place in other RNA molecules, such as primary miRNA (pri-miRNAs). Mediates m6A methylation of Xist RNA, thereby participating in random X inactivation: m6A methylation of Xist leads to target YTHDC1 reader on Xist and promote transcription repression activity of Xist. METTL3 mediates methylation of pri-miRNAs, marking them for recognition and processing by DGCR8. Acts as a positive regulator of mRNA translation independently of the methyltransferase activity: promotes translation by interacting with the translation initiation machinery in the cytoplasm. This Mus musculus (Mouse) protein is N(6)-adenosine-methyltransferase catalytic subunit METTL3.